We begin with the raw amino-acid sequence, 341 residues long: 4-hydroxy-2-oxovalerate aldolase (341 aa).

Residues 9 to 260 form the Pyruvate carboxyltransferase domain; the sequence is VVITDSTLRD…ATGIDLYRVL (252 aa). 17–18 contacts substrate; sequence RD. D18 is a binding site for Mn(2+). H21 (proton acceptor) is an active-site residue. 2 residues coordinate substrate: S172 and H199. Mn(2+) contacts are provided by H199 and H201.

It belongs to the 4-hydroxy-2-oxovalerate aldolase family.

It catalyses the reaction (S)-4-hydroxy-2-oxopentanoate = acetaldehyde + pyruvate. The polypeptide is 4-hydroxy-2-oxovalerate aldolase (Spirochaeta aurantia).